The primary structure comprises 530 residues: NSVYRLKEIVKVLAYYGFGFIVDSKLNGNKKSPENLRKAFEELGPTFIKIGQILSTRPDLLPLPYIKELSKLQNNVPPENFIDIENLFFEELSSTIDNTFLYFDKTPIGSASIAQVHDAILKDGRFVIVKIQRPGIAEMMKTDLSIIKKLLNITKTKFTDALIDPKEAIDELFISTTQELDFINEINNIKKFKKLNEDVKFVRTPYTIDKLCTEKIIVMEKIVGIKIDNLKKLLNEGYDLEELGKKLTLSYFKQVFQDGFFHGDPHPGNLLIRENHICYIDFGIMGTISKSLKISLNDAILAVAYHDVNKMISVIMSIGVKKGYVNRNSLYESIEYLFDNYISVSLKNIKISVMLQEIFQISKNNNIKLPKELTMLLKSTLMIEGVIARISPELSIVDVLIPYVKSQNQNLFFRNFDFDNLLLNGFKFVKSSSEFPSKFVELSESIIRGRAKIQLQHNNLQKPIKDLNRMVNRMVFAIIISSMIIGSSLILRTNIGPKLHDISIIGISGFMIAALMGFYLLISILRSGTL.

The protein belongs to the protein kinase superfamily. ADCK protein kinase family.

This is an uncharacterized protein from Clostridium pasteurianum.